The following is a 222-amino-acid chain: Chorionic somatomammotropin hormone-like 1 (222 aa).

Residues 1–26 (MAAGSRTSLLLAFALLCLPWLQEAGA) form the signal peptide. Zn(2+) contacts are provided by His44 and Glu205. A disulfide bridge connects residues Cys213 and Cys220.

This sequence belongs to the somatotropin/prolactin family.

The protein localises to the secreted. In terms of biological role, may be a novel gestational hormone required to compensate for absence of other members of the GH/CS cluster during gestation. In Homo sapiens (Human), this protein is Chorionic somatomammotropin hormone-like 1 (CSHL1).